Reading from the N-terminus, the 867-residue chain is Translation initiation factor IF-2 (867 aa).

Residues 367 to 534 enclose the tr-type G domain; the sequence is TRAPVVTIMG…AILLQSEILE (168 aa). The segment at 376-383 is G1; sequence GHVDHGKT. 376-383 is a binding site for GTP; it reads GHVDHGKT. A G2 region spans residues 401-405; the sequence is GITQN. A G3 region spans residues 422-425; the sequence is DTPG. GTP contacts are provided by residues 422-426 and 476-479; these read DTPGH and NKID. Residues 476–479 form a G4 region; it reads NKID. Positions 512 to 514 are G5; it reads SAK.

Belongs to the TRAFAC class translation factor GTPase superfamily. Classic translation factor GTPase family. IF-2 subfamily.

The protein resides in the cytoplasm. Its function is as follows. One of the essential components for the initiation of protein synthesis. Protects formylmethionyl-tRNA from spontaneous hydrolysis and promotes its binding to the 30S ribosomal subunits. Also involved in the hydrolysis of GTP during the formation of the 70S ribosomal complex. The polypeptide is Translation initiation factor IF-2 (Buchnera aphidicola subsp. Schizaphis graminum (strain Sg)).